A 126-amino-acid polypeptide reads, in one-letter code: Profilin-3 (126 aa).

The protein belongs to the profilin family. As to quaternary structure, occurs in many kinds of cells as a complex with monomeric actin in a 1:1 ratio.

The protein resides in the cytoplasm. Its subcellular location is the cytoskeleton. Binds to actin and affects the structure of the cytoskeleton. At high concentrations, profilin prevents the polymerization of actin, whereas it enhances it at low concentrations. By binding to PIP2, it inhibits the formation of IP3 and DG. The sequence is that of Profilin-3 (proC) from Dictyostelium discoideum (Social amoeba).